A 1766-amino-acid polypeptide reads, in one-letter code: Putative ATP-dependent RNA helicase R366 (1766 aa).

The disordered stretch occupies residues 209–239 (KSSSNQNSNQSNQESNESNQEPNESNQEINQ). The segment covering 210-239 (SSSNQNSNQSNQESNESNQEPNESNQEINQ) has biased composition (low complexity). The 210-residue stretch at 656-865 (YHHYSNNRVL…RYYRRINDNR (210 aa)) folds into the Helicase ATP-binding domain. ATP is bound at residue 669 to 676 (GATGVGKS). The short motif at 812–815 (DEAH) is the DEAH box element. Residues 947 to 1116 (DIHKSIKAIN…TMVKLIKSYP (170 aa)) form the Helicase C-terminal domain.

The protein belongs to the DEAD box helicase family. DEAH subfamily.

It catalyses the reaction ATP + H2O = ADP + phosphate + H(+). The sequence is that of Putative ATP-dependent RNA helicase R366 from Acanthamoeba polyphaga mimivirus (APMV).